The following is a 664-amino-acid chain: L-type lectin-domain containing receptor kinase I.3 (664 aa).

An N-terminal signal peptide occupies residues 1–21 (MACRLYLALIFSCVYLICLSS). The Extracellular portion of the chain corresponds to 22–286 (QQETGFVYNG…PKEEKKKLSP (265 aa)). Positions 24-257 (ETGFVYNGFE…NHYILGWSFS (234 aa)) are legume-lectin like. 7 N-linked (GlcNAc...) asparagine glycosylation sites follow: asparagine 55, asparagine 125, asparagine 128, asparagine 181, asparagine 204, asparagine 225, and asparagine 267. A helical transmembrane segment spans residues 287 to 307 (LLIGLVILLVIPVVMVLGGVY). Residues 308-664 (WYRRKKYAEV…THTILDGHGR (357 aa)) lie on the Cytoplasmic side of the membrane. A Protein kinase domain is found at 342–619 (FRKDCRVGKG…LNQDLPLPIF (278 aa)). Residues 348-356 (VGKGGFGEV) and lysine 370 each bind ATP. The active-site Proton acceptor is the aspartate 466.

This sequence in the C-terminal section; belongs to the protein kinase superfamily. Ser/Thr protein kinase family. The protein in the N-terminal section; belongs to the leguminous lectin family. Autophosphorylated on Ser and Thr residues. In terms of tissue distribution, mostly expressed in roots and flowers, and, to a lower extent, in leaves.

The protein localises to the cell membrane. It carries out the reaction L-seryl-[protein] + ATP = O-phospho-L-seryl-[protein] + ADP + H(+). The enzyme catalyses L-threonyl-[protein] + ATP = O-phospho-L-threonyl-[protein] + ADP + H(+). In terms of biological role, involved in resistance response to the pathogenic fungus Alternaria brassicicola. This Arabidopsis thaliana (Mouse-ear cress) protein is L-type lectin-domain containing receptor kinase I.3.